A 599-amino-acid polypeptide reads, in one-letter code: Beta-myrcene synthase, chloroplastic (599 aa).

The N-terminal 34 residues, 1-34, are a transit peptide targeting the chloroplast; that stretch reads MWSTISISMNVAILKKPLNFLHNSNNKASNPRCV. Mg(2+)-binding residues include Asp-352, Asp-356, Asp-496, Thr-500, and Glu-504. Residues 352-356 carry the DDXXD motif motif; sequence DDVYD.

This sequence belongs to the terpene synthase family. Requires Mg(2+) as cofactor. Mn(2+) is required as a cofactor.

The protein resides in the plastid. Its subcellular location is the chloroplast. It carries out the reaction (2E)-geranyl diphosphate = beta-myrcene + diphosphate. It functions in the pathway secondary metabolite biosynthesis; terpenoid biosynthesis. In terms of biological role, monoterpene synthase that catalyzes the formation of beta-myrcene from geranyl diphosphate. This is Beta-myrcene synthase, chloroplastic (MYS) from Ocimum basilicum (Sweet basil).